A 131-amino-acid chain; its full sequence is MATVPTRSGSPRQLTTKQTGDAWEAQARRWLEGKGLRFIAANVNERGGEIDLIMREGRTTVFIEVRYRRSALYGGAAASVTRSKQHKLLQTARLWLARHNGSFDTVDCRFDVVAFTGNEVEWIKDAFNDHS.

Polar residues predominate over residues 1-19 (MATVPTRSGSPRQLTTKQT). A disordered region spans residues 1–21 (MATVPTRSGSPRQLTTKQTGD).

Belongs to the UPF0102 family.

The chain is UPF0102 protein YraN from Escherichia coli O45:K1 (strain S88 / ExPEC).